Consider the following 199-residue polypeptide: Isopentenyl-diphosphate Delta-isomerase (199 aa).

Mn(2+) contacts are provided by His40 and His47. The Nudix hydrolase domain occupies 45–186 (PRHLAFSCHV…PALLSPWAVE (142 aa)). Cys82 is a catalytic residue. Residue Cys82 participates in Mg(2+) binding. His84 is a binding site for Mn(2+). Glu102 is a binding site for Mg(2+). Residues Glu131 and Glu133 each coordinate Mn(2+). Residue Glu133 is part of the active site.

This sequence belongs to the IPP isomerase type 1 family. The cofactor is Mg(2+). Mn(2+) serves as cofactor.

The protein resides in the cytoplasm. It catalyses the reaction isopentenyl diphosphate = dimethylallyl diphosphate. Its pathway is isoprenoid biosynthesis; dimethylallyl diphosphate biosynthesis; dimethylallyl diphosphate from isopentenyl diphosphate: step 1/1. In terms of biological role, catalyzes the 1,3-allylic rearrangement of the homoallylic substrate isopentenyl (IPP) to its highly electrophilic allylic isomer, dimethylallyl diphosphate (DMAPP). This Cutibacterium acnes (strain DSM 16379 / KPA171202) (Propionibacterium acnes) protein is Isopentenyl-diphosphate Delta-isomerase.